Here is a 234-residue protein sequence, read N- to C-terminus: Small ribosomal subunit protein uS5 (234 aa).

The segment covering 1-10 (MEDIKTTTPE) has biased composition (polar residues). Residues 1–69 (MEDIKTTTPE…KDGSGNKPNK (69 aa)) are disordered. A compositionally biased stretch (basic and acidic residues) spans 11-31 (VKNEENKTSEVKEGKALEKNN). An S5 DRBM domain is found at 78–141 (LEEKIVGVKK…KSAKNNMYKV (64 aa)).

Belongs to the universal ribosomal protein uS5 family. Part of the 30S ribosomal subunit. Contacts proteins S4 and S8.

In terms of biological role, with S4 and S12 plays an important role in translational accuracy. Located at the back of the 30S subunit body where it stabilizes the conformation of the head with respect to the body. This Malacoplasma penetrans (strain HF-2) (Mycoplasma penetrans) protein is Small ribosomal subunit protein uS5.